The sequence spans 424 residues: Histidine--tRNA ligase (424 aa).

This sequence belongs to the class-II aminoacyl-tRNA synthetase family. As to quaternary structure, homodimer.

It is found in the cytoplasm. The enzyme catalyses tRNA(His) + L-histidine + ATP = L-histidyl-tRNA(His) + AMP + diphosphate + H(+). This is Histidine--tRNA ligase from Salmonella agona (strain SL483).